The primary structure comprises 290 residues: Short chain dehydrogenase/reductase nsrO (290 aa).

Positions 37 and 149 each coordinate NADP(+). Active-site proton donor residues include Ser-168 and Tyr-182. Residues Tyr-182, Lys-186, and Thr-221 each contribute to the NADP(+) site. Lys-186 (lowers pKa of active site Tyr) is an active-site residue.

The protein belongs to the short-chain dehydrogenases/reductases (SDR) family.

It participates in secondary metabolite biosynthesis. In terms of biological role, short chain dehydrogenase/reductase; part of the gene cluster that mediates the biosynthesis of the tetrahydroxanthone dimer neosartorin, which exhibits antibacterial activity. The two different monomeric units appear to be synthesized by the same set of enzymes, among which the Baeyer-Villiger monooxygenase nsrF is the key enzyme for the divergence of the biosynthetic routes. The pathway begins with the synthesis of atrochrysone thioester by the polyketide synthase nsrB. The atrochrysone carboxyl ACP thioesterase nsrC then breaks the thioester bond and releases the atrochrysone carboxylic acid from AacuL. Atrochrysone carboxylic acid is decarboxylated by the decarboxylase nsrE, and oxidized by the anthrone oxygenase nsrD to yield emodin. Emodin is then reduced to emodin hydroquinone by the oxidoreductase nsrR. A-ring reduction by the short chain dehydrogenase nsrJ, dehydration by the scytalone dehydratase-like protein nsrI and probable spontaneous re-oxidation, results in overall deoxygenation to chrysophanol. The Baeyer-Villiger monooxygenase nsrF accepts chrysophanol as a substrate to insert one oxygen atom at two different positions to yield the precursors of both monomric units. NsrF is promiscuous/flexible in interacting with the 2 (non methylated and methylated) aromatic rings of chrysophanol, thus diverging the biosynthetic pathway at this point. After the hydrolysis of the lactones, methylesterification by the methyltransferase nsrG yields respectively moniliphenone and 2,2',6'-trihydroxy-4-methyl-6-methoxya-cyldiphenylmethanone. The next steps are the hydroxylation by the FAD-dependent monooxygenase nsrK, followed by isomerization by the monooxygenase nsrQ. The short chain dehydrogenase/reductase nsrO then catalyzes the C-5 ketoreduction to give the xanthone skeleton of blennolide C and 5-acetylblennolide A. The acetyltransferase nsrL has a strict substrate specificity and uses only blennolide A but not blennolide C to yield 5-acetylblennolide A as the single-acetylated product. In the final step of the biosynthesis, the heterodimerization of the 2 xanthones, blennolide C and 5-acetylblennolide A, is catalyzed by the cytochrome P450 monooxygenase nsrP. NsrP can utilize at least three different xanthones as its substrates to perform the dimerization reaction. The chain is Short chain dehydrogenase/reductase nsrO from Aspergillus novofumigatus (strain IBT 16806).